A 259-amino-acid polypeptide reads, in one-letter code: Pyridoxine 5'-phosphate synthase (259 aa).

A 3-amino-2-oxopropyl phosphate-binding site is contributed by Asn6. 8-9 (DH) is a binding site for 1-deoxy-D-xylulose 5-phosphate. Arg17 is a 3-amino-2-oxopropyl phosphate binding site. Catalysis depends on His42, which acts as the Proton acceptor. 1-deoxy-D-xylulose 5-phosphate contacts are provided by Arg44 and His49. Glu69 (proton acceptor) is an active-site residue. Thr99 contributes to the 1-deoxy-D-xylulose 5-phosphate binding site. Residue His212 is the Proton donor of the active site. 3-amino-2-oxopropyl phosphate is bound by residues Gly213 and 234 to 235 (GH).

This sequence belongs to the PNP synthase family. As to quaternary structure, homooctamer; tetramer of dimers.

The protein localises to the cytoplasm. The enzyme catalyses 3-amino-2-oxopropyl phosphate + 1-deoxy-D-xylulose 5-phosphate = pyridoxine 5'-phosphate + phosphate + 2 H2O + H(+). It functions in the pathway cofactor biosynthesis; pyridoxine 5'-phosphate biosynthesis; pyridoxine 5'-phosphate from D-erythrose 4-phosphate: step 5/5. Functionally, catalyzes the complicated ring closure reaction between the two acyclic compounds 1-deoxy-D-xylulose-5-phosphate (DXP) and 3-amino-2-oxopropyl phosphate (1-amino-acetone-3-phosphate or AAP) to form pyridoxine 5'-phosphate (PNP) and inorganic phosphate. This is Pyridoxine 5'-phosphate synthase from Nautilia profundicola (strain ATCC BAA-1463 / DSM 18972 / AmH).